Reading from the N-terminus, the 338-residue chain is Tetraacyldisaccharide 4'-kinase (338 aa).

Residue 51–58 (HLGGAGKT) participates in ATP binding.

This sequence belongs to the LpxK family.

It carries out the reaction a lipid A disaccharide + ATP = a lipid IVA + ADP + H(+). It functions in the pathway glycolipid biosynthesis; lipid IV(A) biosynthesis; lipid IV(A) from (3R)-3-hydroxytetradecanoyl-[acyl-carrier-protein] and UDP-N-acetyl-alpha-D-glucosamine: step 6/6. Transfers the gamma-phosphate of ATP to the 4'-position of a tetraacyldisaccharide 1-phosphate intermediate (termed DS-1-P) to form tetraacyldisaccharide 1,4'-bis-phosphate (lipid IVA). The sequence is that of Tetraacyldisaccharide 4'-kinase from Rhodopseudomonas palustris (strain HaA2).